Reading from the N-terminus, the 855-residue chain is DNA mismatch repair protein MutS (855 aa).

ATP is bound at residue 616-623 (GPNMGGKS).

The protein belongs to the DNA mismatch repair MutS family.

In terms of biological role, this protein is involved in the repair of mismatches in DNA. It is possible that it carries out the mismatch recognition step. This protein has a weak ATPase activity. The protein is DNA mismatch repair protein MutS of Salmonella schwarzengrund (strain CVM19633).